Here is a 228-residue protein sequence, read N- to C-terminus: Serum amyloid P-component (228 aa).

A signal peptide spans 1–20 (MDKLLLWMSVFTSLLSEAFA). A Pentraxin (PTX) domain is found at 25–224 (NQKVFVFPRE…YVVIKPRMWD (200 aa)). Residue N52 is glycosylated (N-linked (GlcNAc...) asparagine). A disulfide bridge connects residues C56 and C115. D78, N79, E156, Q157, D158, and Q168 together coordinate Ca(2+).

Belongs to the pentraxin family. Homopentamer. Pentraxin (or pentaxin) have a discoid arrangement of 5 non-covalently bound subunits. The cofactor is Ca(2+).

Its subcellular location is the secreted. The protein is Serum amyloid P-component (Apcs) of Rattus norvegicus (Rat).